The primary structure comprises 120 residues: Ribosome-binding factor A (120 aa).

Belongs to the RbfA family. As to quaternary structure, monomer. Binds 30S ribosomal subunits, but not 50S ribosomal subunits or 70S ribosomes.

The protein resides in the cytoplasm. One of several proteins that assist in the late maturation steps of the functional core of the 30S ribosomal subunit. Associates with free 30S ribosomal subunits (but not with 30S subunits that are part of 70S ribosomes or polysomes). Required for efficient processing of 16S rRNA. May interact with the 5'-terminal helix region of 16S rRNA. The polypeptide is Ribosome-binding factor A (Chlorobaculum tepidum (strain ATCC 49652 / DSM 12025 / NBRC 103806 / TLS) (Chlorobium tepidum)).